A 235-amino-acid chain; its full sequence is Transmembrane emp24 domain-containing protein 9 (235 aa).

A signal peptide spans 1–37 (MAAERSLWVVGLCPGSRLGRVVRVLLLLLWFAARGGA). The Lumenal portion of the chain corresponds to 38–201 (LYFHIGETEK…FRQTSESTNQ (164 aa)). The 99-residue stretch at 47–145 (KKCFIEEIPD…MLRVHLDIQV (99 aa)) folds into the GOLD domain. The tract at residues 121–160 (CLHSNSTKFSLFAGGMLRVHLDIQVGEHANDYAEIAAKDK) is required for interaction with STX17. A glycan (N-linked (GlcNAc...) asparagine) is linked at N125. Residues 154–184 (EIAAKDKLSELQLRVRQLVEQVEQIQKEQNY) are a coiled coil. K160 carries the N6-acetyllysine modification. Residues 202 to 222 (RVLWWSILQTLILVAIGVWQM) form a helical membrane-spanning segment. Over 223 to 235 (RHLKSFFEAKKLV) the chain is Cytoplasmic. Positions 228–229 (FF) match the COPII vesicle coat-binding motif. Positions 228-235 (FFEAKKLV) match the COPI vesicle coat-binding motif.

The protein belongs to the EMP24/GP25L family. As to quaternary structure, monomer and homodimer in endoplasmic reticulum. Predominantly monomeric and to lesser extent homodimeric in endoplasmic reticulum-Golgi intermediate compartment and cis-Golgi network. Probably oligomerizes with other members of the EMP24/GP25L family such as TMED2, TMED7 and TMED10. Interacts with TMED5. Interacts (via C-terminus) with COPG1; the interaction involves dimeric TMED9. Interacts with PTPN2 and SPAST. Interacts with STX17; the interaction is direct. In terms of processing, N-linked glycosylated containing high mannose.

It localises to the endoplasmic reticulum membrane. The protein localises to the golgi apparatus. Its subcellular location is the cis-Golgi network membrane. It is found in the endoplasmic reticulum-Golgi intermediate compartment membrane. The protein resides in the trans-Golgi network membrane. Appears to be involved in vesicular protein trafficking, mainly in the early secretory pathway. In COPI vesicle-mediated retrograde transport involved in the coatomer recruitment to membranes of the early secretory pathway. Increases coatomer-dependent activity of ARFGAP2. Thought to play a crucial role in the specific retention of p24 complexes in cis-Golgi membranes; specifically contributes to the coupled localization of TMED2 and TMED10 in the cis-Golgi network. May be involved in organization of intracellular membranes, such as of the ER-Golgi intermediate compartment and the Golgi apparatus. Involved in ER localization of PTPN2. This Bos taurus (Bovine) protein is Transmembrane emp24 domain-containing protein 9 (TMED9).